We begin with the raw amino-acid sequence, 259 residues long: Phosphonates import ATP-binding protein PhnC (259 aa).

In terms of domain architecture, ABC transporter spans 4 to 245 (ISIQSVTKRF…ALRTIYQREG (242 aa)). An ATP-binding site is contributed by 37 to 44 (GPSGAGKS).

Belongs to the ABC transporter superfamily. Phosphonates importer (TC 3.A.1.9.1) family. As to quaternary structure, the complex is composed of two ATP-binding proteins (PhnC), two transmembrane proteins (PhnE) and a solute-binding protein (PhnD).

Its subcellular location is the cell inner membrane. The catalysed reaction is phosphonate(out) + ATP + H2O = phosphonate(in) + ADP + phosphate + H(+). Its function is as follows. Part of the ABC transporter complex PhnCDE involved in phosphonates import. Responsible for energy coupling to the transport system. In Thiobacillus denitrificans (strain ATCC 25259 / T1), this protein is Phosphonates import ATP-binding protein PhnC.